Consider the following 142-residue polypeptide: NADH-quinone oxidoreductase subunit A (142 aa).

3 helical membrane-spanning segments follow: residues Phe-8–Thr-28, Phe-63–Trp-83, and Phe-93–Trp-113.

The protein belongs to the complex I subunit 3 family. NDH-1 is composed of 14 different subunits. Subunits NuoA, H, J, K, L, M, N constitute the membrane sector of the complex.

It localises to the cell inner membrane. The catalysed reaction is a quinone + NADH + 5 H(+)(in) = a quinol + NAD(+) + 4 H(+)(out). Functionally, NDH-1 shuttles electrons from NADH, via FMN and iron-sulfur (Fe-S) centers, to quinones in the respiratory chain. The immediate electron acceptor for the enzyme in this species is believed to be a menaquinone. Couples the redox reaction to proton translocation (for every two electrons transferred, four hydrogen ions are translocated across the cytoplasmic membrane), and thus conserves the redox energy in a proton gradient. This Chlorobium phaeobacteroides (strain BS1) protein is NADH-quinone oxidoreductase subunit A.